The following is a 464-amino-acid chain: Chromosomal replication initiator protein DnaA (464 aa).

Positions 1–82 (MKNAAELWHN…GSRLDIQFIE (82 aa)) are domain I, interacts with DnaA modulators. The segment at 82–125 (EEGQAKHMLDRQNEEVEVMEVAPAKTKAQKTPKSSDELVMSELG) is domain II. The domain III, AAA+ region stretch occupies residues 126–342 (QLNEKYTFDT…GALTRVIAYA (217 aa)). The ATP site is built by Gly170, Gly172, Lys173, and Thr174. The segment at 343–464 (NLVGRTIDPN…EQIKHELKHS (122 aa)) is domain IV, binds dsDNA.

It belongs to the DnaA family. As to quaternary structure, oligomerizes as a right-handed, spiral filament on DNA at oriC.

It is found in the cytoplasm. Its function is as follows. Plays an essential role in the initiation and regulation of chromosomal replication. ATP-DnaA binds to the origin of replication (oriC) to initiate formation of the DNA replication initiation complex once per cell cycle. Binds the DnaA box (a 9 base pair repeat at the origin) and separates the double-stranded (ds)DNA. Forms a right-handed helical filament on oriC DNA; dsDNA binds to the exterior of the filament while single-stranded (ss)DNA is stabiized in the filament's interior. The ATP-DnaA-oriC complex binds and stabilizes one strand of the AT-rich DNA unwinding element (DUE), permitting loading of DNA polymerase. After initiation quickly degrades to an ADP-DnaA complex that is not apt for DNA replication. Binds acidic phospholipids. The chain is Chromosomal replication initiator protein DnaA from Exiguobacterium sibiricum (strain DSM 17290 / CCUG 55495 / CIP 109462 / JCM 13490 / 255-15).